We begin with the raw amino-acid sequence, 704 residues long: UvrABC system protein C (704 aa).

The disordered stretch occupies residues 1 to 77; that stretch reads MIHDPAEPPA…PAQAGAGPMA (77 aa). The segment covering 49 to 66 has biased composition (acidic residues); sequence VEEDDEARLPEVEDEPEA. Positions 67 to 77 are enriched in low complexity; the sequence is EPAQAGAGPMA. Residues 92 to 170 form the GIY-YIG domain; it reads TSPGVYRMLN…IKQLRPRFNV (79 aa). In terms of domain architecture, UVR spans 280–315; sequence RAVKELLAAEMEKASGELEFETAALYRDRLAALSAI.

This sequence belongs to the UvrC family. Interacts with UvrB in an incision complex.

It is found in the cytoplasm. The UvrABC repair system catalyzes the recognition and processing of DNA lesions. UvrC both incises the 5' and 3' sides of the lesion. The N-terminal half is responsible for the 3' incision and the C-terminal half is responsible for the 5' incision. The chain is UvrABC system protein C from Rhodopseudomonas palustris (strain ATCC BAA-98 / CGA009).